A 209-amino-acid chain; its full sequence is MTRQCNCSEGSCGSGRYEELVLERMLYSARLKETVARRDSDVIAAMATMIAETFRNGGKVLLCGNGGSAADAQHLAAELTIRYRSSVNRPALPAIALSTDTSALTAGANDLGFDEVFSRLTEAYGRPGDLLLGLSTSGNSPNVLKALQTARKLGLKTLALLGGDGGTIRPHADLAVVVPHTGSADRTQECHIAIGHVIVELVESMMGYA.

One can recognise an SIS domain in the interval 50–209 (IAETFRNGGK…ELVESMMGYA (160 aa)). 65–67 (NGG) serves as a coordination point for substrate. The Zn(2+) site is built by His74 and Glu78. Substrate is bound by residues Glu78, 109 to 110 (ND), 135 to 137 (STS), Ser140, and Gln188. Residues Gln188 and His196 each coordinate Zn(2+).

The protein belongs to the SIS family. GmhA subfamily. Requires Zn(2+) as cofactor.

Its subcellular location is the cytoplasm. The enzyme catalyses 2 D-sedoheptulose 7-phosphate = D-glycero-alpha-D-manno-heptose 7-phosphate + D-glycero-beta-D-manno-heptose 7-phosphate. It participates in carbohydrate biosynthesis; D-glycero-D-manno-heptose 7-phosphate biosynthesis; D-glycero-alpha-D-manno-heptose 7-phosphate and D-glycero-beta-D-manno-heptose 7-phosphate from sedoheptulose 7-phosphate: step 1/1. Catalyzes the isomerization of sedoheptulose 7-phosphate in D-glycero-D-manno-heptose 7-phosphate. This chain is Phosphoheptose isomerase, found in Chlorobaculum parvum (strain DSM 263 / NCIMB 8327) (Chlorobium vibrioforme subsp. thiosulfatophilum).